Reading from the N-terminus, the 177-residue chain is Large ribosomal subunit protein uL10 (177 aa).

It belongs to the universal ribosomal protein uL10 family. As to quaternary structure, part of the ribosomal stalk of the 50S ribosomal subunit. The N-terminus interacts with L11 and the large rRNA to form the base of the stalk. The C-terminus forms an elongated spine to which L12 dimers bind in a sequential fashion forming a multimeric L10(L12)X complex.

Forms part of the ribosomal stalk, playing a central role in the interaction of the ribosome with GTP-bound translation factors. This Thermoanaerobacter pseudethanolicus (strain ATCC 33223 / 39E) (Clostridium thermohydrosulfuricum) protein is Large ribosomal subunit protein uL10.